The chain runs to 278 residues: Delta(3,5)-Delta(2,4)-dienoyl-CoA isomerase, peroxisomal (278 aa).

Met-1 carries the N-acetylmethionine modification. Substrate-binding positions include 69–73 (SGIDL) and Gly-128. The Microbody targeting signal signature appears at 276–278 (AKL).

It belongs to the enoyl-CoA hydratase/isomerase family. In terms of tissue distribution, expressed in roots, leaves, stems and flowers.

It is found in the peroxisome. The enzyme catalyses a (3E,5Z)-dienoyl-CoA = a (2E,4E)-(5,6-saturated)-dienoyl-CoA. It participates in lipid metabolism; fatty acid beta-oxidation. Converts 3,5-dienoyl-CoAs to the corresponding 2,4-dienoyl-CoAs. Involved in degradation of unsaturated fatty acids. The protein is Delta(3,5)-Delta(2,4)-dienoyl-CoA isomerase, peroxisomal of Arabidopsis thaliana (Mouse-ear cress).